Consider the following 125-residue polypeptide: Small ribosomal subunit protein uS12m (125 aa).

Belongs to the universal ribosomal protein uS12 family. Component of the mitochondrial ribosome small subunit.

The protein localises to the mitochondrion. In terms of biological role, protein S12 is involved in the translation initiation step. This Arabidopsis thaliana (Mouse-ear cress) protein is Small ribosomal subunit protein uS12m (RPS12).